The chain runs to 174 residues: Ribosome maturation factor RimM (174 aa).

In terms of domain architecture, PRC barrel spans 98–171 (EGEFYFHEII…KIEIELMEGL (74 aa)).

The protein belongs to the RimM family. In terms of assembly, binds ribosomal protein uS19.

It localises to the cytoplasm. In terms of biological role, an accessory protein needed during the final step in the assembly of 30S ribosomal subunit, possibly for assembly of the head region. Essential for efficient processing of 16S rRNA. May be needed both before and after RbfA during the maturation of 16S rRNA. It has affinity for free ribosomal 30S subunits but not for 70S ribosomes. This Bacillus subtilis (strain 168) protein is Ribosome maturation factor RimM.